The sequence spans 321 residues: Ribosomal RNA small subunit methyltransferase H (321 aa).

Residues 40-42 (GGH), Asp60, Phe84, Asp106, and Gln113 each bind S-adenosyl-L-methionine.

Belongs to the methyltransferase superfamily. RsmH family.

It localises to the cytoplasm. It catalyses the reaction cytidine(1402) in 16S rRNA + S-adenosyl-L-methionine = N(4)-methylcytidine(1402) in 16S rRNA + S-adenosyl-L-homocysteine + H(+). Functionally, specifically methylates the N4 position of cytidine in position 1402 (C1402) of 16S rRNA. This chain is Ribosomal RNA small subunit methyltransferase H, found in Histophilus somni (strain 2336) (Haemophilus somnus).